Here is a 448-residue protein sequence, read N- to C-terminus: RING finger protein 44 (448 aa).

The RING-type; atypical zinc-finger motif lies at 396 to 437 (CVVCFSDFESRQLLRVLPCNHEFHAKCVDKWLKTNRTCPICR).

The protein is RING finger protein 44 (rnf44) of Danio rerio (Zebrafish).